A 260-amino-acid polypeptide reads, in one-letter code: Carbonic anhydrase 2 (260 aa).

The Alpha-carbonic anhydrase domain maps to 3–259 (HGWGYADHNG…LKDRKVCASF (257 aa)). H64 functions as the Proton donor/acceptor in the catalytic mechanism. Zn(2+) is bound by residues H94, H96, and H119. 198–199 (TT) is a substrate binding site.

Belongs to the alpha-carbonic anhydrase family. Requires Zn(2+) as cofactor.

It localises to the cytoplasm. The catalysed reaction is hydrogencarbonate + H(+) = CO2 + H2O. In terms of biological role, catalyzes the reversible hydration of carbon dioxide. In Pseudaspius hakonensis (Big-scaled redfin), this protein is Carbonic anhydrase 2 (ca2).